The primary structure comprises 234 residues: Ion-translocating oxidoreductase complex subunit E (234 aa).

Helical transmembrane passes span 62-82, 92-112, 116-136, 151-171, and 205-225; these read LGLG…ISLF, IPIY…LMNA, TLYQ…IIIG, IWDG…LGAL, and SFLL…LLAI.

This sequence belongs to the NqrDE/RnfAE family. As to quaternary structure, the complex is composed of six subunits: RnfA, RnfB, RnfC, RnfD, RnfE and RnfG.

It localises to the cell inner membrane. Functionally, part of a membrane-bound complex that couples electron transfer with translocation of ions across the membrane. The polypeptide is Ion-translocating oxidoreductase complex subunit E (Haemophilus influenzae (strain PittGG)).